The following is a 202-amino-acid chain: Matrix protein (202 aa).

The segment at 12–33 is disordered; sequence RDEDTQKPSPVSAPPDDDDLWL. Positions 35–38 match the PPXY motif motif; that stretch reads PPEY. Residues 115–151 form an essential for glycoprotein binding region; the sequence is KLRRTLIFQWADSRGPLEGEELEYSQEITWDDDTEFV.

The protein belongs to the lyssavirus matrix protein family. Homomultimer. Interacts with nucleoprotein and with the cytoplasmic domain of glycoprotein. Interacts with host ATP6V1A; this interaction plays an important role in virion uncoating after viral entry.

Its subcellular location is the virion membrane. It is found in the host endomembrane system. The protein resides in the host cytoplasm. Functionally, plays a major role in assembly, budding and uncoating of virion after membrane fusion. Completely covers the ribonucleoprotein coil and keep it in condensed bullet-shaped form. Inhibits viral transcription and stimulates replication. Plays a major role in early induction of TRAIL-mediated apoptosis in infected neurons. Inhibits the integrated stress response (ISR) in the infected cell by blocking the formation of stress granules. The sequence is that of Matrix protein (M) from Rabies virus (strain PM1503/AVO1) (RABV).